A 289-amino-acid chain; its full sequence is Urease accessory protein UreD (289 aa).

This sequence belongs to the UreD family. In terms of assembly, ureD, UreF and UreG form a complex that acts as a GTP-hydrolysis-dependent molecular chaperone, activating the urease apoprotein by helping to assemble the nickel containing metallocenter of UreC. The UreE protein probably delivers the nickel.

The protein resides in the cytoplasm. In terms of biological role, required for maturation of urease via the functional incorporation of the urease nickel metallocenter. This Xanthobacter autotrophicus (strain ATCC BAA-1158 / Py2) protein is Urease accessory protein UreD.